The primary structure comprises 168 residues: Prespore-specific protein A (168 aa).

Positions methionine 1 to alanine 19 are cleaved as a signal peptide. 13 O-linked (GlcNAc) threonine glycosylation sites follow: threonine 110, threonine 114, threonine 116, threonine 118, threonine 120, threonine 122, threonine 124, threonine 126, threonine 128, threonine 130, threonine 132, threonine 134, and threonine 138. Tandem repeats lie at residues threonine 116–valine 119, threonine 120–valine 123, and threonine 124–valine 127. The segment at threonine 116–valine 127 is 3 X 4 AA tandem repeats of T-P-T-V. Residues threonine 116–proline 131 are compositionally biased toward low complexity. The disordered stretch occupies residues threonine 116–glycine 147. Serine 140 is a glycosylation site (O-linked (GlcNAc) serine). Glycine 147 carries the GPI-like-anchor amidated glycine lipid modification. A propeptide spans serine 148–cysteine 168 (removed in mature form).

It belongs to the ponticulin family. O-glycosylated in the repeat region. The oligosaccharides contain N-acetylglucosamine and fucose as the major constituents. Post-translationally, the GPI-like-anchor contains a phosphoceramide group, rather than a phosphatidyl group.

Its subcellular location is the cell membrane. In terms of biological role, may bind F-actin and nucleates actin assembly. This Dictyostelium discoideum (Social amoeba) protein is Prespore-specific protein A (pspA).